A 269-amino-acid polypeptide reads, in one-letter code: Formamidopyrimidine-DNA glycosylase (269 aa).

P2 acts as the Schiff-base intermediate with DNA in catalysis. E3 serves as the catalytic Proton donor. The active-site Proton donor; for beta-elimination activity is the K57. DNA contacts are provided by H90, R109, and K150. The segment at 235-269 adopts an FPG-type zinc-finger fold; the sequence is QVYGRAGEPCRACGTPIESAKHGQRSTFFCPRCQR. R259 serves as the catalytic Proton donor; for delta-elimination activity.

It belongs to the FPG family. Monomer. The cofactor is Zn(2+).

The catalysed reaction is Hydrolysis of DNA containing ring-opened 7-methylguanine residues, releasing 2,6-diamino-4-hydroxy-5-(N-methyl)formamidopyrimidine.. It carries out the reaction 2'-deoxyribonucleotide-(2'-deoxyribose 5'-phosphate)-2'-deoxyribonucleotide-DNA = a 3'-end 2'-deoxyribonucleotide-(2,3-dehydro-2,3-deoxyribose 5'-phosphate)-DNA + a 5'-end 5'-phospho-2'-deoxyribonucleoside-DNA + H(+). Involved in base excision repair of DNA damaged by oxidation or by mutagenic agents. Acts as a DNA glycosylase that recognizes and removes damaged bases. Has a preference for oxidized purines, such as 7,8-dihydro-8-oxoguanine (8-oxoG). Has AP (apurinic/apyrimidinic) lyase activity and introduces nicks in the DNA strand. Cleaves the DNA backbone by beta-delta elimination to generate a single-strand break at the site of the removed base with both 3'- and 5'-phosphates. The chain is Formamidopyrimidine-DNA glycosylase from Serratia proteamaculans (strain 568).